The chain runs to 190 residues: Segregation and condensation protein B (190 aa).

It belongs to the ScpB family. Homodimer. Homodimerization may be required to stabilize the binding of ScpA to the Smc head domains. Component of a cohesin-like complex composed of ScpA, ScpB and the Smc homodimer, in which ScpA and ScpB bind to the head domain of Smc. The presence of the three proteins is required for the association of the complex with DNA.

The protein resides in the cytoplasm. Participates in chromosomal partition during cell division. May act via the formation of a condensin-like complex containing Smc and ScpA that pull DNA away from mid-cell into both cell halves. This chain is Segregation and condensation protein B, found in Bacillus cereus (strain ZK / E33L).